A 386-amino-acid chain; its full sequence is L-lactate oxidase (386 aa).

In terms of domain architecture, FMN hydroxy acid dehydrogenase spans 16–382 (AQAPFPICFA…RTITLVKNDG (367 aa)). Y42 lines the pyruvate pocket. Residues 95–97 (PVG), S124, and Q146 each bind FMN. Y148 is a pyruvate binding site. T174 is an FMN binding site. R183 provides a ligand contact to pyruvate. Positions 253 and 275 each coordinate FMN. H277 and R280 together coordinate pyruvate. The active-site Proton acceptor is H277. Residues 308–312 (DSGVY) and R332 each bind FMN.

This sequence belongs to the FMN-dependent alpha-hydroxy acid dehydrogenase family. Homotetramer. Requires FMN as cofactor.

The catalysed reaction is a (2S)-2-hydroxycarboxylate + O2 = a 2-oxocarboxylate + H2O2. It carries out the reaction (S)-lactate + O2 = pyruvate + H2O2. The enzyme catalyses 2-hydroxyoctanoate + O2 = 2-oxooctanoate + H2O2. It catalyses the reaction mandelate + O2 = phenylglyoxylate + H2O2. The catalysed reaction is 2-hydroxyoctadecanoate + O2 = 2-oxooctadecanoate + H2O2. It carries out the reaction (S)-2-hydroxyglutarate + O2 = H2O2 + 2-oxoglutarate. Oxidase that catalyzes the oxidation of a broad range of 2-hydroxyacids in vitro, such as (S)-lactate, 2-hydroxyoctanoate, mandelate, 2-hydroxyoctadecanoate and (S)-2-hydroxyglutarate, to the corresponding 2-oxoacids, with a reduction of O2 to H2O2. May be involved in the utilization of L-lactate as an energy source for growth. The sequence is that of L-lactate oxidase from Lysinibacillus sphaericus (strain C3-41).